The primary structure comprises 195 residues: N-(5'-phosphoribosyl)anthranilate isomerase (195 aa).

It belongs to the TrpF family.

It carries out the reaction N-(5-phospho-beta-D-ribosyl)anthranilate = 1-(2-carboxyphenylamino)-1-deoxy-D-ribulose 5-phosphate. It participates in amino-acid biosynthesis; L-tryptophan biosynthesis; L-tryptophan from chorismate: step 3/5. The chain is N-(5'-phosphoribosyl)anthranilate isomerase from Streptococcus gordonii (strain Challis / ATCC 35105 / BCRC 15272 / CH1 / DL1 / V288).